Consider the following 278-residue polypeptide: 3-methyl-2-oxobutanoate hydroxymethyltransferase 1 (278 aa).

Mg(2+) contacts are provided by Asp49 and Asp88. Residues 49–50 (DS), Asp88, and Lys118 contribute to the 3-methyl-2-oxobutanoate site. Glu120 contacts Mg(2+). Glu187 functions as the Proton acceptor in the catalytic mechanism.

This sequence belongs to the PanB family. As to quaternary structure, homodecamer; pentamer of dimers. The cofactor is Mg(2+).

It is found in the cytoplasm. It carries out the reaction 3-methyl-2-oxobutanoate + (6R)-5,10-methylene-5,6,7,8-tetrahydrofolate + H2O = 2-dehydropantoate + (6S)-5,6,7,8-tetrahydrofolate. The protein operates within cofactor biosynthesis; (R)-pantothenate biosynthesis; (R)-pantoate from 3-methyl-2-oxobutanoate: step 1/2. Catalyzes the reversible reaction in which hydroxymethyl group from 5,10-methylenetetrahydrofolate is transferred onto alpha-ketoisovalerate to form ketopantoate. The chain is 3-methyl-2-oxobutanoate hydroxymethyltransferase 1 from Hahella chejuensis (strain KCTC 2396).